The chain runs to 1606 residues: Pentafunctional AROM polypeptide (1606 aa).

The interval 1 to 390 is 3-dehydroquinate synthase; it reads MANADVLKVS…YEPKATVVPD (390 aa). NAD(+) contacts are provided by residues 45–47, 85–88, 116–118, and D121; these read DTN, ETSK, and GGV. R132 is a 7-phospho-2-dehydro-3-deoxy-D-arabino-heptonate binding site. Position 141 to 142 (141 to 142) interacts with NAD(+); the sequence is TT. 7-phospho-2-dehydro-3-deoxy-D-arabino-heptonate contacts are provided by D148 and K154. K163 contacts NAD(+). Residue N164 participates in 7-phospho-2-dehydro-3-deoxy-D-arabino-heptonate binding. NAD(+) contacts are provided by residues 181–184 and N192; that span reads FLET. E196 is a Zn(2+) binding site. 7-phospho-2-dehydro-3-deoxy-D-arabino-heptonate contacts are provided by residues 196–199 and K256; that span reads EVVK. Residue E266 is the Proton acceptor; for 3-dehydroquinate synthase activity of the active site. 7-phospho-2-dehydro-3-deoxy-D-arabino-heptonate is bound by residues 270–274 and H277; that span reads RNLVN. H277 contributes to the Zn(2+) binding site. H281 acts as the Proton acceptor; for 3-dehydroquinate synthase activity in catalysis. 7-phospho-2-dehydro-3-deoxy-D-arabino-heptonate is bound by residues H293 and K362. H293 lines the Zn(2+) pocket. The interval 403–850 is EPSP synthase; the sequence is VIPGVPRHHP…WDDLENKIGL (448 aa). C832 functions as the For EPSP synthase activity in the catalytic mechanism. The tract at residues 875–1070 is shikimate kinase; it reads AASIILIGMR…TSGRRSYFLC (196 aa). ATP is bound at residue 882–889; that stretch reads GMRGTGKT. The tract at residues 1071–1296 is 3-dehydroquinase; sequence LTYPDVTQSF…AAPGQLSFKQ (226 aa). H1198 (proton acceptor; for 3-dehydroquinate dehydratase activity) is an active-site residue. K1226 (schiff-base intermediate with substrate; for 3-dehydroquinate dehydratase activity) is an active-site residue. The tract at residues 1309-1606 is shikimate dehydrogenase; the sequence is AQRFYLFGTP…QFVFEEECES (298 aa).

It in the N-terminal section; belongs to the sugar phosphate cyclases superfamily. Dehydroquinate synthase family. The protein in the 2nd section; belongs to the EPSP synthase family. This sequence in the 3rd section; belongs to the shikimate kinase family. In the 4th section; belongs to the type-I 3-dehydroquinase family. It in the C-terminal section; belongs to the shikimate dehydrogenase family. As to quaternary structure, homodimer. Requires Zn(2+) as cofactor.

The protein resides in the cytoplasm. The enzyme catalyses 7-phospho-2-dehydro-3-deoxy-D-arabino-heptonate = 3-dehydroquinate + phosphate. It catalyses the reaction 3-dehydroquinate = 3-dehydroshikimate + H2O. It carries out the reaction shikimate + NADP(+) = 3-dehydroshikimate + NADPH + H(+). The catalysed reaction is shikimate + ATP = 3-phosphoshikimate + ADP + H(+). The enzyme catalyses 3-phosphoshikimate + phosphoenolpyruvate = 5-O-(1-carboxyvinyl)-3-phosphoshikimate + phosphate. It functions in the pathway metabolic intermediate biosynthesis; chorismate biosynthesis; chorismate from D-erythrose 4-phosphate and phosphoenolpyruvate: step 2/7. Its pathway is metabolic intermediate biosynthesis; chorismate biosynthesis; chorismate from D-erythrose 4-phosphate and phosphoenolpyruvate: step 3/7. It participates in metabolic intermediate biosynthesis; chorismate biosynthesis; chorismate from D-erythrose 4-phosphate and phosphoenolpyruvate: step 4/7. The protein operates within metabolic intermediate biosynthesis; chorismate biosynthesis; chorismate from D-erythrose 4-phosphate and phosphoenolpyruvate: step 5/7. It functions in the pathway metabolic intermediate biosynthesis; chorismate biosynthesis; chorismate from D-erythrose 4-phosphate and phosphoenolpyruvate: step 6/7. Its function is as follows. The AROM polypeptide catalyzes 5 consecutive enzymatic reactions in prechorismate polyaromatic amino acid biosynthesis. This chain is Pentafunctional AROM polypeptide, found in Laccaria bicolor (strain S238N-H82 / ATCC MYA-4686) (Bicoloured deceiver).